Consider the following 234-residue polypeptide: Probable GTP-binding protein EngB (234 aa).

Residues 23–209 (AVPEVAFAGR…QRTVAGWLCL (187 aa)) enclose the EngB-type G domain. GTP-binding positions include 31 to 38 (GRSNAGKS), 58 to 62 (GRTQH), 82 to 85 (DLPG), 149 to 152 (TKAD), and 187 to 190 (LFSS). 2 residues coordinate Mg(2+): Ser-38 and Thr-60. The interval 210-234 (PEAMPPSPDAEPAKKTPSPDAQRGE) is disordered.

The protein belongs to the TRAFAC class TrmE-Era-EngA-EngB-Septin-like GTPase superfamily. EngB GTPase family. Mg(2+) is required as a cofactor.

In terms of biological role, necessary for normal cell division and for the maintenance of normal septation. This Ralstonia nicotianae (strain ATCC BAA-1114 / GMI1000) (Ralstonia solanacearum) protein is Probable GTP-binding protein EngB.